The chain runs to 537 residues: MSTASSSSSQTPHSAPQRMRRSTAGSPPAAAGSGTGPAGSCAPAAGAGRLLQPIRATVPYQLLRGSQHSPTRPAAAATAAAALGSLSGPGGARGPSPSSPTPPPAAAPAEQAPRAKGRPRRSPESRRRSSSPERRSPGSPVCRVDRPKSQHIRTSSTIRRTSSLDTITGPYLTGQWPRDPHVHYPSCMRDKATQTPSCWAEEGAEKRSHQRSASWGSADQLKEIAKLRQQLQRSKQSSRHSKEKDRQSPLHGNHITISHTQAIGSRSVPMPLSNISVPKSSVSRVPCNVEGISPELEKVFIKENNGKEEVSKPLDIPDGRRAPLPAHYRSSSTRSIDTQTPSVQERSSSCSSHSPCVSPFCPPESQDGSPCSTEDLLYDRDKDSGSSSPLPKYASSPKPNNSYMFKREPPEGCERVKVFEEMASRQPISAPLFSCPDKNKVNFIPTGSAFCPVKLLGPLLPASDLMLKNSPNSGQSSALATLTVEQLSSRVSFTSLSDDTSTADSLEPSAQQPSQQQQLLQDLQVEEHVSTQNYVMI.

Disordered stretches follow at residues M1–A45 and L62–H254. Phosphoserine occurs at positions 69, 96, 98, and 99. Low complexity predominate over residues S69–L86. Pro residues predominate over residues P97 to A106. The residue at position 101 (T101) is a Phosphothreonine. The segment covering R121–S136 has biased composition (basic and acidic residues). Positions I152–T168 are enriched in low complexity. Residues S162 and S163 each carry the phosphoserine modification. 2 positions are modified to phosphothreonine: T166 and T168. The span at R178–A192 shows a compositional bias: basic and acidic residues. S214 is subject to Phosphoserine. Residues S217–K244 adopt a coiled-coil conformation. S248 is subject to Phosphoserine. T256 is subject to Phosphothreonine. S293 is subject to Phosphoserine. Positions E309–R321 are enriched in basic and acidic residues. A disordered region spans residues E309–R407. The span at R329 to R346 shows a compositional bias: polar residues. The residue at position 333 (T333) is a Phosphothreonine. Residue S335 is modified to Phosphoserine. Position 340 is a phosphothreonine (T340). Residues S347–P359 are compositionally biased toward low complexity. A phosphoserine mark is found at S384, S388, S396, S402, and S470. Residues S495–L520 form a disordered region.

As to expression, predominantly expressed in thymus and testis, especially in CD4+CD8+ cells and at specific stages of spermatogenesis.

The sequence is that of Glucocorticoid-induced transcript 1 protein (Glcci1) from Mus musculus (Mouse).